A 468-amino-acid chain; its full sequence is Trigger factor (468 aa).

In terms of domain architecture, PPIase FKBP-type spans 162 to 243; sequence GDVLTLDLQA…VSQVAARELP (82 aa). A disordered region spans residues 428–468; it reads NGEIVDLDDEEDEETEAAEADATEAADAEKADDKAEEKTEG. Positions 432–453 are enriched in acidic residues; sequence VDLDDEEDEETEAAEADATEAA. Over residues 454–468 the composition is skewed to basic and acidic residues; it reads DAEKADDKAEEKTEG.

The protein belongs to the FKBP-type PPIase family. Tig subfamily.

It is found in the cytoplasm. The catalysed reaction is [protein]-peptidylproline (omega=180) = [protein]-peptidylproline (omega=0). In terms of biological role, involved in protein export. Acts as a chaperone by maintaining the newly synthesized protein in an open conformation. Functions as a peptidyl-prolyl cis-trans isomerase. In Streptomyces coelicolor (strain ATCC BAA-471 / A3(2) / M145), this protein is Trigger factor.